Here is a 161-residue protein sequence, read N- to C-terminus: Nucleotide-binding protein Gmet_3206 (161 aa).

This sequence belongs to the YajQ family.

Nucleotide-binding protein. This Geobacter metallireducens (strain ATCC 53774 / DSM 7210 / GS-15) protein is Nucleotide-binding protein Gmet_3206.